A 172-amino-acid chain; its full sequence is Protein GrpE (172 aa).

This sequence belongs to the GrpE family. Homodimer.

The protein resides in the cytoplasm. In terms of biological role, participates actively in the response to hyperosmotic and heat shock by preventing the aggregation of stress-denatured proteins, in association with DnaK and GrpE. It is the nucleotide exchange factor for DnaK and may function as a thermosensor. Unfolded proteins bind initially to DnaJ; upon interaction with the DnaJ-bound protein, DnaK hydrolyzes its bound ATP, resulting in the formation of a stable complex. GrpE releases ADP from DnaK; ATP binding to DnaK triggers the release of the substrate protein, thus completing the reaction cycle. Several rounds of ATP-dependent interactions between DnaJ, DnaK and GrpE are required for fully efficient folding. This chain is Protein GrpE, found in Thermotoga sp. (strain RQ2).